The sequence spans 258 residues: Aspartate/glutamate leucyltransferase (258 aa).

It belongs to the R-transferase family. Bpt subfamily.

The protein localises to the cytoplasm. The catalysed reaction is N-terminal L-glutamyl-[protein] + L-leucyl-tRNA(Leu) = N-terminal L-leucyl-L-glutamyl-[protein] + tRNA(Leu) + H(+). The enzyme catalyses N-terminal L-aspartyl-[protein] + L-leucyl-tRNA(Leu) = N-terminal L-leucyl-L-aspartyl-[protein] + tRNA(Leu) + H(+). Its function is as follows. Functions in the N-end rule pathway of protein degradation where it conjugates Leu from its aminoacyl-tRNA to the N-termini of proteins containing an N-terminal aspartate or glutamate. The protein is Aspartate/glutamate leucyltransferase of Bradyrhizobium diazoefficiens (strain JCM 10833 / BCRC 13528 / IAM 13628 / NBRC 14792 / USDA 110).